Reading from the N-terminus, the 202-residue chain is Putative pituitary tumor-transforming gene 3 protein (202 aa).

Positions 61 to 64 (RKAL) match the D-box motif. The short motif at 163–173 (PPSPLKMPSPP) is the SH3-binding element.

It belongs to the securin family.

It localises to the cytoplasm. Its subcellular location is the nucleus. The sequence is that of Putative pituitary tumor-transforming gene 3 protein (PTTG3) from Pan troglodytes (Chimpanzee).